An 858-amino-acid polypeptide reads, in one-letter code: DNA mismatch repair protein MutS (858 aa).

613–620 (GPNMAGKS) contacts ATP.

It belongs to the DNA mismatch repair MutS family.

In terms of biological role, this protein is involved in the repair of mismatches in DNA. It is possible that it carries out the mismatch recognition step. This protein has a weak ATPase activity. The polypeptide is DNA mismatch repair protein MutS (Dehalococcoides mccartyi (strain ATCC BAA-2100 / JCM 16839 / KCTC 5957 / BAV1)).